The chain runs to 145 residues: LIM domain only protein 3 (145 aa).

2 consecutive LIM zinc-binding domains span residues 11–73 and 75–137; these read KGCA…LFGV and GNCA…GLMK.

This is LIM domain only protein 3 from Danio rerio (Zebrafish).